The chain runs to 337 residues: tRNA N6-adenosine threonylcarbamoyltransferase (337 aa).

The Fe cation site is built by His111 and His115. Substrate-binding positions include 134-138 (LVSGG), Asp167, Gly180, and Asn272. Asp300 is a Fe cation binding site.

The protein belongs to the KAE1 / TsaD family. Fe(2+) serves as cofactor.

The protein localises to the cytoplasm. It catalyses the reaction L-threonylcarbamoyladenylate + adenosine(37) in tRNA = N(6)-L-threonylcarbamoyladenosine(37) in tRNA + AMP + H(+). In terms of biological role, required for the formation of a threonylcarbamoyl group on adenosine at position 37 (t(6)A37) in tRNAs that read codons beginning with adenine. Is involved in the transfer of the threonylcarbamoyl moiety of threonylcarbamoyl-AMP (TC-AMP) to the N6 group of A37, together with TsaE and TsaB. TsaD likely plays a direct catalytic role in this reaction. The polypeptide is tRNA N6-adenosine threonylcarbamoyltransferase (Shewanella sediminis (strain HAW-EB3)).